A 165-amino-acid polypeptide reads, in one-letter code: Transcription antitermination protein NusB (165 aa).

Belongs to the NusB family.

Functionally, involved in transcription antitermination. Required for transcription of ribosomal RNA (rRNA) genes. Binds specifically to the boxA antiterminator sequence of the ribosomal RNA (rrn) operons. The chain is Transcription antitermination protein NusB from Bradyrhizobium diazoefficiens (strain JCM 10833 / BCRC 13528 / IAM 13628 / NBRC 14792 / USDA 110).